A 179-amino-acid chain; its full sequence is Large ribosomal subunit protein uL5 (179 aa).

It belongs to the universal ribosomal protein uL5 family. As to quaternary structure, part of the 50S ribosomal subunit; part of the 5S rRNA/L5/L18/L25 subcomplex. Contacts the 5S rRNA and the P site tRNA. Forms a bridge to the 30S subunit in the 70S ribosome.

Its function is as follows. This is one of the proteins that bind and probably mediate the attachment of the 5S RNA into the large ribosomal subunit, where it forms part of the central protuberance. In the 70S ribosome it contacts protein S13 of the 30S subunit (bridge B1b), connecting the 2 subunits; this bridge is implicated in subunit movement. Contacts the P site tRNA; the 5S rRNA and some of its associated proteins might help stabilize positioning of ribosome-bound tRNAs. This chain is Large ribosomal subunit protein uL5, found in Francisella tularensis subsp. mediasiatica (strain FSC147).